We begin with the raw amino-acid sequence, 184 residues long: NADH dehydrogenase [ubiquinone] 1 alpha subcomplex assembly factor 3 (184 aa).

Belongs to the NDUFAF3 family. In terms of assembly, interacts with NDUFAF4, NDUFS2 and NDUFS3.

The protein resides in the nucleus. It is found in the mitochondrion inner membrane. In terms of biological role, essential factor for the assembly of mitochondrial NADH:ubiquinone oxidoreductase complex (complex I). The protein is NADH dehydrogenase [ubiquinone] 1 alpha subcomplex assembly factor 3 (NDUFAF3) of Homo sapiens (Human).